The following is a 77-amino-acid chain: MKFYLLLTAALLLTAVIIEAAPTDHQDEARDLMREERDDKSNCPISHPNYCSFTPVCCKHECLSNNKCSSSEFIPGQ.

The signal sequence occupies residues Met-1–Ala-20. A propeptide spanning residues Ala-21–Glu-36 is cleaved from the precursor. 3 cysteine pairs are disulfide-bonded: Cys-43–Cys-58, Cys-51–Cys-62, and Cys-57–Cys-68.

Expressed by the venom duct.

The protein localises to the secreted. The protein is Conotoxin Cl6.12 of Californiconus californicus (California cone).